The following is a 368-amino-acid chain: tRNA(Met) cytidine acetate ligase (368 aa).

ATP-binding positions include 7-20 (IAEF…HKYL), G96, N152, and R175.

The protein belongs to the TmcAL family.

It is found in the cytoplasm. The enzyme catalyses cytidine(34) in elongator tRNA(Met) + acetate + ATP = N(4)-acetylcytidine(34) in elongator tRNA(Met) + AMP + diphosphate. In terms of biological role, catalyzes the formation of N(4)-acetylcytidine (ac(4)C) at the wobble position of elongator tRNA(Met), using acetate and ATP as substrates. First activates an acetate ion to form acetyladenylate (Ac-AMP) and then transfers the acetyl group to tRNA to form ac(4)C34. This is tRNA(Met) cytidine acetate ligase from Streptococcus pyogenes serotype M3 (strain SSI-1).